The sequence spans 131 residues: Large-conductance mechanosensitive channel (131 aa).

Helical transmembrane passes span 8–28, 30–50, and 67–87; these read FAIRGNVIDLAVGVIIGGAFG, IVSSLVNDIIMPLVGLILGGI, and GAFIQTVVDFLIIAFSIFLFV.

It belongs to the MscL family. As to quaternary structure, homopentamer.

It localises to the cell membrane. Functionally, channel that opens in response to stretch forces in the membrane lipid bilayer. May participate in the regulation of osmotic pressure changes within the cell. This is Large-conductance mechanosensitive channel from Geobacillus kaustophilus (strain HTA426).